The chain runs to 942 residues: Valine--tRNA ligase (942 aa).

The 'HIGH' region signature appears at 43–53; the sequence is PNVTGTLHMGH. Positions 551–555 match the 'KMSKS' region motif; sequence KMSKS. Residue Lys-554 coordinates ATP. Positions 876 to 942 form a coiled coil; that stretch reads EGLVDLDAER…AGLREQRAKL (67 aa).

It belongs to the class-I aminoacyl-tRNA synthetase family. ValS type 1 subfamily. As to quaternary structure, monomer.

It localises to the cytoplasm. It catalyses the reaction tRNA(Val) + L-valine + ATP = L-valyl-tRNA(Val) + AMP + diphosphate. Catalyzes the attachment of valine to tRNA(Val). As ValRS can inadvertently accommodate and process structurally similar amino acids such as threonine, to avoid such errors, it has a 'posttransfer' editing activity that hydrolyzes mischarged Thr-tRNA(Val) in a tRNA-dependent manner. This chain is Valine--tRNA ligase, found in Stenotrophomonas maltophilia (strain K279a).